Consider the following 156-residue polypeptide: Aspartate carbamoyltransferase regulatory chain (156 aa).

Residues Cys-109, Cys-114, Cys-138, and Cys-141 each contribute to the Zn(2+) site.

It belongs to the PyrI family. As to quaternary structure, contains catalytic and regulatory chains. The cofactor is Zn(2+).

Its function is as follows. Involved in allosteric regulation of aspartate carbamoyltransferase. The polypeptide is Aspartate carbamoyltransferase regulatory chain (Baumannia cicadellinicola subsp. Homalodisca coagulata).